The sequence spans 85 residues: uncharacterized protein (85 aa).

Residues 17–53 are a coiled coil; it reads KKRYEMLVQELLKEDDEEREKILAEELELLLDFLKKA.

This is an uncharacterized protein from Archaeoglobus fulgidus (strain ATCC 49558 / DSM 4304 / JCM 9628 / NBRC 100126 / VC-16).